A 340-amino-acid chain; its full sequence is S-adenosylmethionine:tRNA ribosyltransferase-isomerase (340 aa).

It belongs to the QueA family. In terms of assembly, monomer.

The protein resides in the cytoplasm. The enzyme catalyses 7-aminomethyl-7-carbaguanosine(34) in tRNA + S-adenosyl-L-methionine = epoxyqueuosine(34) in tRNA + adenine + L-methionine + 2 H(+). It participates in tRNA modification; tRNA-queuosine biosynthesis. Functionally, transfers and isomerizes the ribose moiety from AdoMet to the 7-aminomethyl group of 7-deazaguanine (preQ1-tRNA) to give epoxyqueuosine (oQ-tRNA). In Francisella tularensis subsp. holarctica (strain OSU18), this protein is S-adenosylmethionine:tRNA ribosyltransferase-isomerase.